A 495-amino-acid chain; its full sequence is Probable cytosol aminopeptidase (495 aa).

The Mn(2+) site is built by Lys-267 and Asp-272. Lys-279 is a catalytic residue. Mn(2+)-binding residues include Asp-290, Asp-349, and Glu-351. The active site involves Arg-353.

This sequence belongs to the peptidase M17 family. Mn(2+) is required as a cofactor.

Its subcellular location is the cytoplasm. It carries out the reaction Release of an N-terminal amino acid, Xaa-|-Yaa-, in which Xaa is preferably Leu, but may be other amino acids including Pro although not Arg or Lys, and Yaa may be Pro. Amino acid amides and methyl esters are also readily hydrolyzed, but rates on arylamides are exceedingly low.. The catalysed reaction is Release of an N-terminal amino acid, preferentially leucine, but not glutamic or aspartic acids.. In terms of biological role, presumably involved in the processing and regular turnover of intracellular proteins. Catalyzes the removal of unsubstituted N-terminal amino acids from various peptides. This chain is Probable cytosol aminopeptidase, found in Histophilus somni (strain 2336) (Haemophilus somnus).